Here is a 529-residue protein sequence, read N- to C-terminus: 2-(3-amino-3-carboxypropyl)histidine synthase subunit 2-2 (529 aa).

[4Fe-4S] cluster-binding residues include C130, C151, and C366.

The protein belongs to the DPH1/DPH2 family. DPH2 subfamily. As to quaternary structure, component of the 2-(3-amino-3-carboxypropyl)histidine synthase complex composed of DPH1, DPH2, DPH3 and a NADH-dependent reductase, predominantly CBR1. It depends on [4Fe-4S] cluster as a cofactor.

It localises to the cytoplasm. The protein operates within protein modification; peptidyl-diphthamide biosynthesis. Functionally, required for the first step of diphthamide biosynthesis, a post-translational modification of histidine which occurs in elongation factor 2. DPH1 and DPH2 transfer a 3-amino-3-carboxypropyl (ACP) group from S-adenosyl-L-methionine (SAM) to a histidine residue, the reaction is assisted by a reduction system comprising DPH3 and a NADH-dependent reductase, predominantly CBR1. Facilitates the reduction of the catalytic iron-sulfur cluster found in the DPH1 subunit. This is 2-(3-amino-3-carboxypropyl)histidine synthase subunit 2-2 from Candida albicans (strain SC5314 / ATCC MYA-2876) (Yeast).